The sequence spans 840 residues: Wings apart-like protein 2 (840 aa).

3 disordered regions span residues 1 to 37 (MMERTYGRRKPGMLNDDVSRAEHIFPSSSSPELEPVD), 56 to 78 (SDNDFSEKRNKRPRNGGGGFGSN), and 532 to 594 (FDLE…DHHV). Positions 546-557 (KQKKSKGQKRKG) are enriched in basic residues. Basic and acidic residues predominate over residues 558–567 (SYRDKKDERS). Over residues 569 to 585 (QLFSSQEESNHGLNSQE) the composition is skewed to polar residues. A WAPL domain is found at 764 to 819 (KEAEKMIVEAYSALLLAFLSTESRSIRNAIRDYLPKRDMAILVPVLDRFVAFHTTL).

The protein belongs to the WAPL family. As to quaternary structure, interacts with the cohesin complex throughout the cell cycle. As to expression, expressed in roots, leaves, buds and siliques.

It localises to the nucleus. It is found in the chromosome. Regulator of sister chromatid cohesion in meiosis which negatively regulates cohesin association with chromatin, acting as an antagonist of CTF7. Cohesion ensures that chromosome partitioning is accurate in both meiotic and mitotic cells and plays an important role in DNA repair. Essential for the prophase removal of cohesin during meiosis thus determining the timely release of meiotic cohesion. Important for proper spindle attachment and assembly during meiosis. Helps to prevent abnormal centromere association during prophase I in meiocytes. Required for early embryonic patterning. Also involved in chromosome segregation during mitosis. The chain is Wings apart-like protein 2 from Arabidopsis thaliana (Mouse-ear cress).